Consider the following 434-residue polypeptide: Trigger factor (434 aa).

Residues glutamate 161–proline 246 enclose the PPIase FKBP-type domain.

The protein belongs to the FKBP-type PPIase family. Tig subfamily.

It is found in the cytoplasm. The enzyme catalyses [protein]-peptidylproline (omega=180) = [protein]-peptidylproline (omega=0). Involved in protein export. Acts as a chaperone by maintaining the newly synthesized protein in an open conformation. Functions as a peptidyl-prolyl cis-trans isomerase. This Pectobacterium carotovorum subsp. carotovorum (strain PC1) protein is Trigger factor.